Consider the following 167-residue polypeptide: tRNA-specific adenosine deaminase (167 aa).

Residues 6–117 (FSHEYWMRHA…DAKTGAAGSL (112 aa)) form the CMP/dCMP-type deaminase domain. Zn(2+) is bound at residue His-57. Catalysis depends on Glu-59, which acts as the Proton donor. Positions 87 and 90 each coordinate Zn(2+).

The protein belongs to the cytidine and deoxycytidylate deaminase family. As to quaternary structure, homodimer. The cofactor is Zn(2+).

It carries out the reaction adenosine(34) in tRNA + H2O + H(+) = inosine(34) in tRNA + NH4(+). Its function is as follows. Catalyzes the deamination of adenosine to inosine at the wobble position 34 of tRNA(Arg2). This chain is tRNA-specific adenosine deaminase, found in Escherichia coli O157:H7.